The primary structure comprises 307 residues: Ribonuclease Z (307 aa).

Zn(2+)-binding residues include H63, H65, D67, H68, H141, D212, and H270. The active-site Proton acceptor is the D67.

Belongs to the RNase Z family. In terms of assembly, homodimer. Zn(2+) serves as cofactor.

The catalysed reaction is Endonucleolytic cleavage of RNA, removing extra 3' nucleotides from tRNA precursor, generating 3' termini of tRNAs. A 3'-hydroxy group is left at the tRNA terminus and a 5'-phosphoryl group is left at the trailer molecule.. Functionally, zinc phosphodiesterase, which displays some tRNA 3'-processing endonuclease activity. Probably involved in tRNA maturation, by removing a 3'-trailer from precursor tRNA. The protein is Ribonuclease Z of Bacillus cereus (strain ATCC 14579 / DSM 31 / CCUG 7414 / JCM 2152 / NBRC 15305 / NCIMB 9373 / NCTC 2599 / NRRL B-3711).